Here is a 348-residue protein sequence, read N- to C-terminus: Ion-translocating oxidoreductase complex subunit D (348 aa).

5 helical membrane passes run 19-39 (FMLW…AFFG), 41-61 (GVVI…IVVA), 66-86 (KSTT…ILAM), 87-107 (AIPP…ALLL), and 122-142 (PAMV…TSWL). Thr186 is modified (FMN phosphoryl threonine). 5 consecutive transmembrane segments (helical) span residues 212–232 (IFAR…LFLL), 236–256 (IIHW…SALT), 265–285 (LNVL…FIAT), 291–311 (SITP…AYLI), and 315–335 (GSYP…VPLI).

Belongs to the NqrB/RnfD family. In terms of assembly, the complex is composed of six subunits: RnfA, RnfB, RnfC, RnfD, RnfE and RnfG. The cofactor is FMN.

The protein localises to the cell inner membrane. Part of a membrane-bound complex that couples electron transfer with translocation of ions across the membrane. The polypeptide is Ion-translocating oxidoreductase complex subunit D (Haemophilus ducreyi (strain 35000HP / ATCC 700724)).